The sequence spans 87 residues: Phosphocarrier protein HPr (87 aa).

Residues 1-87 form the HPr domain; that stretch reads MASKDFHIVA…AETMTKEGLA (87 aa). His15 (pros-phosphohistidine intermediate) is an active-site residue. Ser46 is modified (phosphoserine; by HPrK/P).

The protein belongs to the HPr family.

It localises to the cytoplasm. Phosphorylation on Ser-46 inhibits the phosphoryl transfer from enzyme I to HPr. In terms of biological role, general (non sugar-specific) component of the phosphoenolpyruvate-dependent sugar phosphotransferase system (sugar PTS). This major carbohydrate active-transport system catalyzes the phosphorylation of incoming sugar substrates concomitantly with their translocation across the cell membrane. The phosphoryl group from phosphoenolpyruvate (PEP) is transferred to the phosphoryl carrier protein HPr by enzyme I. Phospho-HPr then transfers it to the PTS EIIA domain. Functionally, P-Ser-HPr interacts with the catabolite control protein A (CcpA), forming a complex that binds to DNA at the catabolite response elements cre, operator sites preceding a large number of catabolite-regulated genes. Thus, P-Ser-HPr is a corepressor in carbon catabolite repression (CCR), a mechanism that allows bacteria to coordinate and optimize the utilization of available carbon sources. P-Ser-HPr also plays a role in inducer exclusion, in which it probably interacts with several non-PTS permeases and inhibits their transport activity. The sequence is that of Phosphocarrier protein HPr (ptsH) from Streptococcus salivarius.